Consider the following 427-residue polypeptide: Endothelin-1 receptor (427 aa).

A signal peptide spans 1–20; that stretch reads METFWLRLSFWVALVGGVIS. The Extracellular segment spans residues 21 to 80; the sequence is DNPESYSTNLSIHVDSVATFHGTELSFVVTTHQPTNLALPSNGSMHNYCPQQTKITSAFK. 2 N-linked (GlcNAc...) asparagine glycosylation sites follow: Asn29 and Asn62. A helical transmembrane segment spans residues 81–102; it reads YINTVISCTIFIVGMVGNATLL. Residues 103-112 lie on the Cytoplasmic side of the membrane; that stretch reads RIIYQNKCMR. The chain crosses the membrane as a helical span at residues 113 to 132; sequence NGPNALIASLALGDLIYVVI. Residues 133 to 159 lie on the Extracellular side of the membrane; that stretch reads DLPINVFKLLAGRWPFEQNDFGVFLCK. Cys158 and Cys239 are disulfide-bonded. The chain crosses the membrane as a helical span at residues 160–181; it reads LFPFLQKSSVGITVLNLCALSV. The Cytoplasmic segment spans residues 182-205; the sequence is DRYRAVASWSRVQGIGIPLVTAIE. The chain crosses the membrane as a helical span at residues 206-229; the sequence is IVSIWILSFILAIPEAIGFVMVPF. Topologically, residues 230-256 are extracellular; it reads EYKGAQHRTCMLNATSKFMEFYQDVKD. Residues 257–278 traverse the membrane as a helical segment; the sequence is WWLFGFYFCMPLVCTAIFYTLM. Residues 279–306 are Cytoplasmic-facing; that stretch reads TCEMLNRRNGSLRIALSEHLKQRREVAK. A helical membrane pass occupies residues 307–328; the sequence is TVFCLVVIFALCWFPLHLSRIL. Residues 329–347 are Extracellular-facing; the sequence is KKTVYDEMDTNRCELLSFL. The chain crosses the membrane as a helical span at residues 348 to 372; sequence LLMDYIGINLATMNSCINPIALYFV. Topologically, residues 373 to 427 are cytoplasmic; it reads SKKFKNCFQSCLCCCCYQSKSLMTSVPMNGTSIQWKNHEQNNHNTERSSHKDSIN. Ser425 bears the Phosphoserine mark.

The protein belongs to the G-protein coupled receptor 1 family. Endothelin receptor subfamily. EDNRA sub-subfamily. As to quaternary structure, interacts with HDAC7 and KAT5.

Its subcellular location is the cell membrane. In terms of biological role, receptor for endothelin-1. Mediates its action by association with G proteins that activate a phosphatidylinositol-calcium second messenger system. The rank order of binding affinities for ET-A is: ET1 &gt; ET2 &gt;&gt; ET3. This Bos taurus (Bovine) protein is Endothelin-1 receptor.